The sequence spans 290 residues: Large ribosomal subunit protein uL2m (290 aa).

It belongs to the universal ribosomal protein uL2 family. Probably part of the large ribosomal subunit.

The protein resides in the hydrogenosome. This chain is Large ribosomal subunit protein uL2m (rpl2), found in Nyctotherus ovalis.